A 607-amino-acid polypeptide reads, in one-letter code: UPF0329 protein ECU06_1610 (607 aa).

Disordered regions lie at residues 312-410 (VHEV…RSKG) and 531-570 (TSSEKTGKGSSPSFGKGDDVDEIEEDGSSDMSGFQYPPGV). Over residues 313 to 347 (HEVKERESEEKRREEESLRNAEELLRMEEREKGEG) the composition is skewed to basic and acidic residues. A compositionally biased stretch (basic residues) spans 353-364 (KGKKKRGKKGAG). The segment covering 365–374 (KAKEESKEED) has biased composition (basic and acidic residues). The segment covering 375–393 (RGEEEEESVEAEVPVEEMA) has biased composition (acidic residues). Positions 531–543 (TSSEKTGKGSSPS) are enriched in polar residues. The span at 549 to 558 (DVDEIEEDGS) shows a compositional bias: acidic residues.

Belongs to the UPF0329 family.

The polypeptide is UPF0329 protein ECU06_1610 (Encephalitozoon cuniculi (strain GB-M1) (Microsporidian parasite)).